The primary structure comprises 86 residues: Photosystem I reaction center subunit PsaK 1 (86 aa).

The propeptide occupies M1–A8. Helical transmembrane passes span L14–F34 and P60–L80.

It belongs to the PsaG/PsaK family. In terms of assembly, the cyanobacterial PSI reaction center is composed of one copy each of PsaA,B,C,D,E,F,I,J,K,L,M and X, and forms dimeric and tetrameric complexes.

Its subcellular location is the cellular thylakoid membrane. The sequence is that of Photosystem I reaction center subunit PsaK 1 (psaK1) from Nostoc sp. (strain PCC 7120 / SAG 25.82 / UTEX 2576).